The following is a 509-amino-acid chain: MYLEEKLHKIKKPIMVLGTSSGAGKSLTVTAICRILKNLAEQPIPFKGQNMSNNAWVDWEGGEMAYSQALQAFACGVNPSSEMNPILLKPQGNSVSEVIHLGKSIGTTSAKNYYQDWFIPGWEVIKKSLNSIYKKNPNCRLIIEGAGSPVEMNLKHRDLTNLKIAKYLKANCILVTDIERGGVFAQIIGTLELMKPEEKKLIKGIIINRFRGDLSLFEEGKKWIEEKTQIPVIGIVPWLNDSFPPEDSLDLLENKSRFTNAEIKVGIIKLPSISNFSDFDPLENEESILIEWIRESQNLKKYDFIILPGSKQTIKDQMFLEKTGLSHDLREYSNNKGHIIGICGGLQMLGTFLEDPFLKEGSKTFSEQKIKGIGLLPLRTTFFEEKLTRQISSESLWPCQSKINGFEIHNGQTELDNTQNSLKINPIFKDLNLGWYKENKEGGTIAGTYIHGIFENDIWRDQYINLIRMNKKLPALKKRTSSYKNKREKIIENLANEFNKHLNLSSLLN.

One can recognise a GATase cobBQ-type domain in the interval 262–459 (EIKVGIIKLP…IHGIFENDIW (198 aa)). Cys343 functions as the Nucleophile in the catalytic mechanism. The active site involves His451.

This sequence belongs to the CobB/CobQ family. CobQ subfamily.

The protein operates within cofactor biosynthesis; adenosylcobalamin biosynthesis. In terms of biological role, catalyzes amidations at positions B, D, E, and G on adenosylcobyrinic A,C-diamide. NH(2) groups are provided by glutamine, and one molecule of ATP is hydrogenolyzed for each amidation. The chain is Cobyric acid synthase from Prochlorococcus marinus (strain MIT 9312).